Reading from the N-terminus, the 320-residue chain is Cytochrome f (320 aa).

Positions 1–35 (MQNRNTFSWVKEQMTRFISVSIMIYVITRTSISNA) are cleaved as a signal peptide. Residues tyrosine 36, cysteine 56, cysteine 59, and histidine 60 each coordinate heme. Residues 286 to 306 (VQGLLFFLASVILAQIFLVLK) traverse the membrane as a helical segment.

This sequence belongs to the cytochrome f family. As to quaternary structure, the 4 large subunits of the cytochrome b6-f complex are cytochrome b6, subunit IV (17 kDa polypeptide, petD), cytochrome f and the Rieske protein, while the 4 small subunits are PetG, PetL, PetM and PetN. The complex functions as a dimer. Requires heme as cofactor.

The protein localises to the plastid. It localises to the chloroplast thylakoid membrane. Component of the cytochrome b6-f complex, which mediates electron transfer between photosystem II (PSII) and photosystem I (PSI), cyclic electron flow around PSI, and state transitions. This chain is Cytochrome f, found in Liriodendron tulipifera (Tuliptree).